The primary structure comprises 1417 residues: DNA-directed RNA polymerase subunit beta' (1417 aa).

Residues Cys-71, Cys-73, Cys-86, and Cys-89 each contribute to the Zn(2+) site. Mg(2+) is bound by residues Asp-461, Asp-463, and Asp-465. Zn(2+)-binding residues include Cys-815, Cys-889, Cys-896, and Cys-899.

Belongs to the RNA polymerase beta' chain family. The RNAP catalytic core consists of 2 alpha, 1 beta, 1 beta' and 1 omega subunit. When a sigma factor is associated with the core the holoenzyme is formed, which can initiate transcription. Mg(2+) serves as cofactor. Zn(2+) is required as a cofactor.

The enzyme catalyses RNA(n) + a ribonucleoside 5'-triphosphate = RNA(n+1) + diphosphate. Functionally, DNA-dependent RNA polymerase catalyzes the transcription of DNA into RNA using the four ribonucleoside triphosphates as substrates. The sequence is that of DNA-directed RNA polymerase subunit beta' from Pasteurella multocida (strain Pm70).